The chain runs to 933 residues: MNQIKSNRELYLQYSASAPKLLAHVSKLLIFCRNSGISIPKGIRNIFEFTWEELINDPAVPTASEIQDLVVTFGTPTVVLAEVIPVQVLPMQKKQPPPAPPPTLMPAATSGGKYVPPTSTSAKLMPNGQNTLHKFQRQSIHLLTELLSLKMKAMVESASAGANPLDITKRFVEASQLLHLNAKEMAFDCLTGTVGKSCLSTAQLGKESSMNISAMGVNTPYQLVYQTSTACLSFSLCTGKESRKKDIGAKPKPVDDVSPQPVRARTPPENTVVELPDPCPEAREKLQDMCRHIEAERILWRGRNASCPMIFRNYRSRISSHLMLASKGDSHHPLTTGTQITASAPHQPSSQHAQMGRHSQEWKGPKKPIKLHYTFYDGSSFIYYPSGNIALLQIPTCCRGKPITCLFNDMPNTFLALFNAEGLGCVYYNLKNCCPYVLVLDEEGGITNDQKGYIVHRWSWASKTETLLSLEYKVNEQMKLTVLGQDSITVTFTSMNETVTISVSPKSCPHNVLHDKRPVRRISLMDEKVSKTNRALAEIKKRFQKTVTQFMNSVLLAAGLFTLEYPNPKETETSRVKLKPGSNQDRIRKTSLYQGENHMRIQSARQDSIINETLKEDSILTSLAHVQKKNGKVQVKVLPRGKRREVRSPTRWAASPSDCPLVLRRLILKEDIRAGCKCIVKAPLVSDLELERFLSAPRDPNQVLVFGIMSSQDPTLTAQLQWLMDTLYSHLQQGRSSPCIQCRHDPYRLLRYDLDSPLQKDPPLMVKKFAVIHGMVLMFAGGKLLFGGCVLNGYGFSKQNLLKQIFRAQQDCKMGYFLPDNYKFKHDAFKASRIAKPCGLSSRGVPSQFLGLETEPSMSTYVTNLDDTESTKKPPSDDYEGSVSSVALVDKIEKEPPPSPEKVKPPEIELQPFTKMRRSSKKTAGFKKLNSKK.

Basic and acidic residues predominate over residues 244–255; that stretch reads KKDIGAKPKPVD. 2 disordered regions span residues 244–277 and 343–364; these read KKDI…ELPD and SAPH…EWKG. Residues 343–353 show a composition bias toward polar residues; sequence SAPHQPSSQHA. The helical transmembrane segment at 771–791 threads the bilayer; that stretch reads VIHGMVLMFAGGKLLFGGCVL. Over residues 890–907 the composition is skewed to basic and acidic residues; the sequence is DKIEKEPPPSPEKVKPPE. The interval 890–933 is disordered; the sequence is DKIEKEPPPSPEKVKPPEIELQPFTKMRRSSKKTAGFKKLNSKK. A compositionally biased stretch (basic residues) spans 915-933; the sequence is KMRRSSKKTAGFKKLNSKK.

The protein localises to the membrane. This is an uncharacterized protein from Mus musculus (Mouse).